Consider the following 465-residue polypeptide: tRNA modification GTPase MnmE (465 aa).

(6S)-5-formyl-5,6,7,8-tetrahydrofolate-binding residues include arginine 21, glutamate 85, and lysine 124. A TrmE-type G domain is found at 220 to 387 (GVPVAIIGET…LQQRLVAAAH (168 aa)). Asparagine 230 serves as a coordination point for K(+). GTP contacts are provided by residues 230 to 235 (NAGKST), 249 to 255 (SDIHGTT), and 274 to 277 (DTAG). Mg(2+) is bound at residue serine 234. Residues serine 249, isoleucine 251, and threonine 254 each coordinate K(+). Residue threonine 255 participates in Mg(2+) binding. Lysine 465 lines the (6S)-5-formyl-5,6,7,8-tetrahydrofolate pocket.

It belongs to the TRAFAC class TrmE-Era-EngA-EngB-Septin-like GTPase superfamily. TrmE GTPase family. As to quaternary structure, homodimer. Heterotetramer of two MnmE and two MnmG subunits. It depends on K(+) as a cofactor.

The protein localises to the cytoplasm. Its function is as follows. Exhibits a very high intrinsic GTPase hydrolysis rate. Involved in the addition of a carboxymethylaminomethyl (cmnm) group at the wobble position (U34) of certain tRNAs, forming tRNA-cmnm(5)s(2)U34. This is tRNA modification GTPase MnmE from Bacteroides fragilis (strain ATCC 25285 / DSM 2151 / CCUG 4856 / JCM 11019 / LMG 10263 / NCTC 9343 / Onslow / VPI 2553 / EN-2).